Consider the following 192-residue polypeptide: 3-hydroxyanthranilate 3,4-dioxygenase 1 (192 aa).

Residue arginine 50 coordinates O2. Fe cation contacts are provided by histidine 54, glutamate 60, and histidine 102. Position 60 (glutamate 60) interacts with substrate. Residues arginine 106 and glutamate 116 each contribute to the substrate site. A divalent metal cation-binding residues include cysteine 131, cysteine 134, cysteine 168, and cysteine 171.

Belongs to the 3-HAO family. Requires Fe(2+) as cofactor.

The protein localises to the cytoplasm. The catalysed reaction is 3-hydroxyanthranilate + O2 = (2Z,4Z)-2-amino-3-carboxymuconate 6-semialdehyde. It participates in cofactor biosynthesis; NAD(+) biosynthesis; quinolinate from L-kynurenine: step 3/3. Its function is as follows. Catalyzes the oxidative ring opening of 3-hydroxyanthranilate to 2-amino-3-carboxymuconate semialdehyde, which spontaneously cyclizes to quinolinate. This is 3-hydroxyanthranilate 3,4-dioxygenase 1 (bna1-1) from Aspergillus oryzae (strain ATCC 42149 / RIB 40) (Yellow koji mold).